The following is a 325-amino-acid chain: Probable cell division protein WhiA (325 aa).

Residues 273 to 306 (SLEELGALADPPLTKDAVAGRIRRLLALADKRAN) constitute a DNA-binding region (H-T-H motif).

Belongs to the WhiA family.

Its function is as follows. Involved in cell division and chromosome segregation. The sequence is that of Probable cell division protein WhiA from Frankia alni (strain DSM 45986 / CECT 9034 / ACN14a).